Reading from the N-terminus, the 435-residue chain is Glutamyl-tRNA reductase (435 aa).

Residues 49-52 (TCNR), Ser-109, 114-116 (ETQ), and Gln-120 contribute to the substrate site. Cys-50 serves as the catalytic Nucleophile. Residue 189 to 194 (GAGEMS) coordinates NADP(+).

It belongs to the glutamyl-tRNA reductase family. Homodimer.

It catalyses the reaction (S)-4-amino-5-oxopentanoate + tRNA(Glu) + NADP(+) = L-glutamyl-tRNA(Glu) + NADPH + H(+). Its pathway is porphyrin-containing compound metabolism; protoporphyrin-IX biosynthesis; 5-aminolevulinate from L-glutamyl-tRNA(Glu): step 1/2. Catalyzes the NADPH-dependent reduction of glutamyl-tRNA(Glu) to glutamate 1-semialdehyde (GSA). This chain is Glutamyl-tRNA reductase, found in Listeria monocytogenes serotype 4a (strain HCC23).